We begin with the raw amino-acid sequence, 224 residues long: Orotidine 5'-phosphate decarboxylase (224 aa).

Substrate-binding positions include D10, K32, 59–68 (DLKLHDIPNT), T115, R175, Q184, G204, and R205. The active-site Proton donor is K61.

This sequence belongs to the OMP decarboxylase family. Type 1 subfamily. Homodimer.

It catalyses the reaction orotidine 5'-phosphate + H(+) = UMP + CO2. It participates in pyrimidine metabolism; UMP biosynthesis via de novo pathway; UMP from orotate: step 2/2. Catalyzes the decarboxylation of orotidine 5'-monophosphate (OMP) to uridine 5'-monophosphate (UMP). The chain is Orotidine 5'-phosphate decarboxylase from Novosphingobium aromaticivorans (strain ATCC 700278 / DSM 12444 / CCUG 56034 / CIP 105152 / NBRC 16084 / F199).